Reading from the N-terminus, the 91-residue chain is MQNSNWYKFFKNIKPEIISFSFLVSLLWFIRSPLKNTTELLEFEVEPKTIPFNQEFLNQVYEKAKHKYIWNYSPTQIIHKLEKLINTRIRI.

It is found in the plastid. The protein resides in the cyanelle. This is an uncharacterized protein from Cyanophora paradoxa.